A 184-amino-acid chain; its full sequence is Photosystem I assembly protein Ycf4 (184 aa).

The next 2 membrane-spanning stretches (helical) occupy residues 22-42 and 57-77; these read FCWA…GTSS and IVFF…LFIS.

This sequence belongs to the Ycf4 family.

It is found in the plastid. It localises to the chloroplast thylakoid membrane. Functionally, seems to be required for the assembly of the photosystem I complex. This Helianthus annuus (Common sunflower) protein is Photosystem I assembly protein Ycf4.